We begin with the raw amino-acid sequence, 321 residues long: Cysteine and histidine-rich domain-containing protein 1 (321 aa).

Positions 9, 14, 28, 31, 46, 47, 63, 68, 152, 157, 170, 173, 188, 189, 205, and 210 each coordinate Zn(2+). CHORD domains follow at residues Cys-9–His-68 and Cys-152–His-210. A CS domain is found at Val-218 to Lys-308.

Its function is as follows. Regulates centrosome duplication. Controls the secretion of the tyrosine kinase receptor let-23/EGFR from the endoplasmic reticulum and is required for the localization of let-23/EGFR to the plasma membrane of vulval precursor cells. It thus plays a role in positively regulating let/EGFR signaling, and anchor cell and vulval precursor cell alignment. Plays a role in vulval development and morphogenesis. The polypeptide is Cysteine and histidine-rich domain-containing protein 1 (Caenorhabditis elegans).